We begin with the raw amino-acid sequence, 59 residues long: UPF0434 protein HEAR2489 (59 aa).

The protein belongs to the UPF0434 family.

In Herminiimonas arsenicoxydans, this protein is UPF0434 protein HEAR2489.